The sequence spans 250 residues: Diaminopimelate epimerase (250 aa).

The substrate site is built by Asn-11 and Asn-60. The active-site Proton donor is the Cys-69. Residues 70-71 (GN), Asn-164, and 182-183 (ER) contribute to the substrate site. The active-site Proton acceptor is the Cys-192. Substrate is bound at residue 193 to 194 (GT).

The protein belongs to the diaminopimelate epimerase family. Homodimer.

The protein resides in the cytoplasm. It carries out the reaction (2S,6S)-2,6-diaminopimelate = meso-2,6-diaminopimelate. Its pathway is amino-acid biosynthesis; L-lysine biosynthesis via DAP pathway; DL-2,6-diaminopimelate from LL-2,6-diaminopimelate: step 1/1. Catalyzes the stereoinversion of LL-2,6-diaminopimelate (L,L-DAP) to meso-diaminopimelate (meso-DAP), a precursor of L-lysine and an essential component of the bacterial peptidoglycan. This is Diaminopimelate epimerase from Nitratiruptor sp. (strain SB155-2).